The chain runs to 317 residues: Dehydrogenase/reductase SDR family protein 7-like (317 aa).

Over 1 to 10 the chain is Cytoplasmic; that stretch reads MKNLAERSAG. Residues 11–31 form a helical; Signal-anchor for type II membrane protein membrane-spanning segment; it reads SLYWWLLATLFLPIAIPGLVL. Residues 32-317 are Peroxisomal-facing; the sequence is KLLTMMKEQR…KKRAEKLNST (286 aa). 52–76 contributes to the NAD(+) binding site; it reads LITGASSGLGEALAHSFFLAGCKVV. Substrate is bound at residue S189. Y202 functions as the Proton acceptor in the catalytic mechanism.

This sequence belongs to the short-chain dehydrogenases/reductases (SDR) family.

It is found in the peroxisome membrane. In terms of biological role, putative oxidoreductase. This is Dehydrogenase/reductase SDR family protein 7-like from Anopheles gambiae (African malaria mosquito).